Here is a 254-residue protein sequence, read N- to C-terminus: 3-deoxy-manno-octulosonate cytidylyltransferase (254 aa).

The protein belongs to the KdsB family.

It localises to the cytoplasm. It carries out the reaction 3-deoxy-alpha-D-manno-oct-2-ulosonate + CTP = CMP-3-deoxy-beta-D-manno-octulosonate + diphosphate. The protein operates within nucleotide-sugar biosynthesis; CMP-3-deoxy-D-manno-octulosonate biosynthesis; CMP-3-deoxy-D-manno-octulosonate from 3-deoxy-D-manno-octulosonate and CTP: step 1/1. Its pathway is bacterial outer membrane biogenesis; lipopolysaccharide biosynthesis. Its function is as follows. Activates KDO (a required 8-carbon sugar) for incorporation into bacterial lipopolysaccharide in Gram-negative bacteria. The sequence is that of 3-deoxy-manno-octulosonate cytidylyltransferase from Tolumonas auensis (strain DSM 9187 / NBRC 110442 / TA 4).